The following is a 479-amino-acid chain: tRNA modification GTPase MnmE (479 aa).

Residues Arg25, Glu82, and Lys134 each contribute to the (6S)-5-formyl-5,6,7,8-tetrahydrofolate site. Positions 230–401 (GLRVVIAGQP…LRAALLARAG (172 aa)) constitute a TrmE-type G domain. Residue Asn240 participates in K(+) binding. GTP contacts are provided by residues 240-245 (NAGKSS), 259-265 (TPIPGTT), 284-287 (DTAG), 352-355 (NKAD), and 382-384 (SAR). A Mg(2+)-binding site is contributed by Ser244. Positions 259, 261, and 264 each coordinate K(+). Thr265 serves as a coordination point for Mg(2+). Position 479 (Lys479) interacts with (6S)-5-formyl-5,6,7,8-tetrahydrofolate.

It belongs to the TRAFAC class TrmE-Era-EngA-EngB-Septin-like GTPase superfamily. TrmE GTPase family. As to quaternary structure, homodimer. Heterotetramer of two MnmE and two MnmG subunits. K(+) serves as cofactor.

The protein localises to the cytoplasm. Exhibits a very high intrinsic GTPase hydrolysis rate. Involved in the addition of a carboxymethylaminomethyl (cmnm) group at the wobble position (U34) of certain tRNAs, forming tRNA-cmnm(5)s(2)U34. In Leptothrix cholodnii (strain ATCC 51168 / LMG 8142 / SP-6) (Leptothrix discophora (strain SP-6)), this protein is tRNA modification GTPase MnmE.